A 911-amino-acid polypeptide reads, in one-letter code: Beta-galactosidase 12 (911 aa).

The signal sequence occupies residues 1 to 25 (MAARVAAAVAAALLAAALLLPGAAA). Glu-192 functions as the Proton donor in the catalytic mechanism. Residue Glu-262 is the Nucleophile of the active site. Residues Asn-263, Asn-389, Asn-473, and Asn-777 are each glycosylated (N-linked (GlcNAc...) asparagine). The SUEL-type lectin domain occupies 744 to 831 (EDTSTRGTLN…ATLAVQLLLA (88 aa)).

This sequence belongs to the glycosyl hydrolase 35 family.

Its subcellular location is the secreted. It localises to the extracellular space. It is found in the apoplast. The catalysed reaction is Hydrolysis of terminal non-reducing beta-D-galactose residues in beta-D-galactosides.. In Oryza sativa subsp. japonica (Rice), this protein is Beta-galactosidase 12.